The sequence spans 393 residues: Demethylspheroidene O-methyltransferase (393 aa).

Positions 1-36 (MPKDDHTGATADRTAQPTGTGKQPLVPGQPGAAPVQ) are disordered. Residues 26-36 (VPGQPGAAPVQ) are compositionally biased toward low complexity. S-adenosyl-L-methionine contacts are provided by D259 and R297.

Belongs to the class I-like SAM-binding methyltransferase superfamily. Cation-independent O-methyltransferase family.

The enzyme catalyses demethylspheroidene + S-adenosyl-L-methionine = spheroidene + S-adenosyl-L-homocysteine + H(+). The protein operates within carotenoid biosynthesis; spheroidene biosynthesis. Its function is as follows. Methyltransferase that mediates the O-methylation of 1-hydroxy carotenoids. Converts hydroxyneurosporene to methoxyneurosporene or demethylspheroidene to spheroidene. Also able to produce spirilloxanthin. The polypeptide is Demethylspheroidene O-methyltransferase (crtF) (Rhodobacter capsulatus (strain ATCC BAA-309 / NBRC 16581 / SB1003)).